Reading from the N-terminus, the 354-residue chain is Uroporphyrinogen decarboxylase (354 aa).

Residues 27–31 (RQAGR), D77, Y154, S209, and H327 contribute to the substrate site.

This sequence belongs to the uroporphyrinogen decarboxylase family. Homodimer.

Its subcellular location is the cytoplasm. The catalysed reaction is uroporphyrinogen III + 4 H(+) = coproporphyrinogen III + 4 CO2. The protein operates within porphyrin-containing compound metabolism; protoporphyrin-IX biosynthesis; coproporphyrinogen-III from 5-aminolevulinate: step 4/4. Catalyzes the decarboxylation of four acetate groups of uroporphyrinogen-III to yield coproporphyrinogen-III. This chain is Uroporphyrinogen decarboxylase, found in Shewanella baltica (strain OS223).